The sequence spans 827 residues: Glycerol-3-phosphate acyltransferase (827 aa).

The short motif at cysteine 325–methionine 330 is the HXXXXD motif element.

It belongs to the GPAT/DAPAT family.

Its subcellular location is the cell inner membrane. It carries out the reaction sn-glycerol 3-phosphate + an acyl-CoA = a 1-acyl-sn-glycero-3-phosphate + CoA. It functions in the pathway phospholipid metabolism; CDP-diacylglycerol biosynthesis; CDP-diacylglycerol from sn-glycerol 3-phosphate: step 1/3. The polypeptide is Glycerol-3-phosphate acyltransferase (Shigella dysenteriae serotype 1 (strain Sd197)).